The chain runs to 710 residues: Proline-rich receptor-like protein kinase PERK13 (710 aa).

The tract at residues 1–229 (MSDSPTSSPP…SVPPPANSGG (229 aa)) is disordered. The Extracellular segment spans residues 1–235 (MSDSPTSSPP…NSGGGYQGKT (235 aa)). Composition is skewed to pro residues over residues 7–21 (SSPP…PPPD), 29–130 (APPP…PPPP), 137–151 (PPAP…PPAS), and 168–188 (ATSP…PNAP). N191 carries an N-linked (GlcNAc...) asparagine glycan. The span at 209-220 (SPSRGVPSSGNS) shows a compositional bias: low complexity. The chain crosses the membrane as a helical span at residues 236 to 256 (MAGFAIAGFAVIALMAVVFLV). The Cytoplasmic segment spans residues 257–710 (RRKKKRNIDA…ENRNFNNRRY (454 aa)). Residues 289–334 (QNPTKGYSGPGGYNSQQQSNSGNSFGSQRGGGGYTRSGSAPDSAVM) are disordered. Residues 301 to 315 (YNSQQQSNSGNSFGS) are compositionally biased toward low complexity. Residue T342 is modified to Phosphothreonine. One can recognise a Protein kinase domain in the interval 353-619 (FSKHNILGEG…RHSGPKRPRM (267 aa)). Residues 359-367 (LGEGGFGCV) and K381 contribute to the ATP site. Y426 is modified (phosphotyrosine). The Proton acceptor role is filled by D477. S510 is modified (phosphoserine). T511 and T516 each carry phosphothreonine. Y524 carries the post-translational modification Phosphotyrosine. The interval 676-710 (SGDYSVQDSRKGSNGASSEFTRNETENRNFNNRRY) is disordered.

This sequence belongs to the protein kinase superfamily. Ser/Thr protein kinase family. Interacts with KIPK1 and KIPK2 (via its cytosolic domain). As to expression, mostly expressed in roots, especially in root hairs.

The protein localises to the cell membrane. The enzyme catalyses L-seryl-[protein] + ATP = O-phospho-L-seryl-[protein] + ADP + H(+). It carries out the reaction L-threonyl-[protein] + ATP = O-phospho-L-threonyl-[protein] + ADP + H(+). Its function is as follows. Negatively regulates root hair elongation. This chain is Proline-rich receptor-like protein kinase PERK13 (PERK13), found in Arabidopsis thaliana (Mouse-ear cress).